A 206-amino-acid polypeptide reads, in one-letter code: Large ribosomal subunit protein uL4 (206 aa).

Residues 48-75 are disordered; it reads TQSAKTRAEVSGGGIKPWRQKGTGRARQ.

Belongs to the universal ribosomal protein uL4 family. Part of the 50S ribosomal subunit.

In terms of biological role, one of the primary rRNA binding proteins, this protein initially binds near the 5'-end of the 23S rRNA. It is important during the early stages of 50S assembly. It makes multiple contacts with different domains of the 23S rRNA in the assembled 50S subunit and ribosome. Forms part of the polypeptide exit tunnel. The protein is Large ribosomal subunit protein uL4 of Clostridium botulinum (strain Loch Maree / Type A3).